A 184-amino-acid polypeptide reads, in one-letter code: ATP synthase subunit b, chloroplastic (184 aa).

Residues 27-49 (LATNLINLSVVLGVLIFFGKGVL) traverse the membrane as a helical segment.

This sequence belongs to the ATPase B chain family. In terms of assembly, F-type ATPases have 2 components, F(1) - the catalytic core - and F(0) - the membrane proton channel. F(1) has five subunits: alpha(3), beta(3), gamma(1), delta(1), epsilon(1). F(0) has four main subunits: a(1), b(1), b'(1) and c(10-14). The alpha and beta chains form an alternating ring which encloses part of the gamma chain. F(1) is attached to F(0) by a central stalk formed by the gamma and epsilon chains, while a peripheral stalk is formed by the delta, b and b' chains.

It is found in the plastid. It localises to the chloroplast thylakoid membrane. F(1)F(0) ATP synthase produces ATP from ADP in the presence of a proton or sodium gradient. F-type ATPases consist of two structural domains, F(1) containing the extramembraneous catalytic core and F(0) containing the membrane proton channel, linked together by a central stalk and a peripheral stalk. During catalysis, ATP synthesis in the catalytic domain of F(1) is coupled via a rotary mechanism of the central stalk subunits to proton translocation. Its function is as follows. Component of the F(0) channel, it forms part of the peripheral stalk, linking F(1) to F(0). The polypeptide is ATP synthase subunit b, chloroplastic (Manihot esculenta (Cassava)).